Reading from the N-terminus, the 344-residue chain is C5a anaphylatoxin chemotactic receptor 2 (344 aa).

The Extracellular segment spans residues 1-44; the sequence is MMNHTTSEYYDYEYDHEHYSDLPDVPVDCPAGTCFTSDVYLIVL. Asn-3 carries an N-linked (GlcNAc...) asparagine glycan. Residues 45–67 form a helical membrane-spanning segment; that stretch reads LVLYAAVFLVGVPGNTLVAWVTW. The Cytoplasmic portion of the chain corresponds to 68-78; the sequence is KESRHRLGASW. A helical membrane pass occupies residues 79 to 101; the sequence is FLHLTMADLLCCVSLPFLAVPIA. At 102-120 the chain is on the extracellular side; it reads QKGHWPYGAAGCWLLSSIT. A disulfide bond links Cys-113 and Cys-192. A helical membrane pass occupies residues 121-143; it reads ILSMYASVLLLTGLSGDLFLLAF. Over 144–155 the chain is Cytoplasmic; that stretch reads RPSWKGADHRTF. Residues 156 to 178 traverse the membrane as a helical segment; sequence GVRVVQASSWMLGLLLTVPSAVY. Residues 179-208 lie on the Extracellular side of the membrane; sequence RRLLQEHYPPRLVCGIDYGGSVSAEVAITT. The chain crosses the membrane as a helical span at residues 209-231; the sequence is VRFLFGFLGPLVFMAGCHGILQR. At 232–243 the chain is on the cytoplasmic side; that stretch reads QMARRHWPLGTA. The chain crosses the membrane as a helical span at residues 244-266; the sequence is VVVGFFICWTPYHVLRVIIAAAP. Over 267 to 280 the chain is Extracellular; sequence PHSLLLARVLEAEP. Residues 281-300 traverse the membrane as a helical segment; sequence LFNGLALAHSALNPIMFLYF. At 301–344 the chain is on the cytoplasmic side; sequence GRKQLCKSLQAACHWALRDPQDEESAVTKVSISTSHEMVSEMPV. Ser-325 carries the phosphoserine modification.

This sequence belongs to the G-protein coupled receptor 1 family. As to quaternary structure, interacts with C3 (the anaphylatoxin peptide C3a and the adipogenic hormone ASP); the interaction occurs with higher affinity for ASP, enhancing the phosphorylation and activation of GPR77, recruitment of ARRB2 to the cell surface and endocytosis of GRP77. Highly expressed in liver and spleen. Lower levels in intestine, brain and kidney. Also expressed in adipose tissues with highest levels in gonadal and ingual fat depots. Lower levels in brown tissue.

The protein resides in the cell membrane. Receptor for the chemotactic and inflammatory C3a, C4a and C5a anaphylatoxin peptides and also for their dearginated forms ASP/C3adesArg, C4adesArg and C5adesArg respectively. Couples weakly to G(i)-mediated signaling pathways. This Mus musculus (Mouse) protein is C5a anaphylatoxin chemotactic receptor 2 (C5ar2).